A 535-amino-acid polypeptide reads, in one-letter code: T-complex protein 1 subunit beta (535 aa).

N-acetylalanine is present on Ala-2. The residue at position 3 (Ser-3) is a Phosphoserine. Position 13 is an N6-acetyllysine (Lys-13). Residue Gly-44 participates in ADP binding. Gly-44 provides a ligand contact to ATP. Ser-60 is modified (phosphoserine). A Mg(2+)-binding site is contributed by Asp-97. Positions 98, 99, 100, and 101 each coordinate ADP. ATP contacts are provided by Gly-98, Thr-99, and Thr-100. Residue Lys-154 is modified to N6-acetyllysine. 2 residues coordinate ADP: Ser-168 and Ser-169. Position 181 is an N6-acetyllysine (Lys-181). Lys-248 participates in a covalent cross-link: Glycyl lysine isopeptide (Lys-Gly) (interchain with G-Cter in SUMO2). Residue Ser-260 is modified to Phosphoserine. Residue Thr-261 is modified to Phosphothreonine. 3 residues coordinate ADP: Gly-410, Glu-495, and Lys-500. 2 residues coordinate ATP: Glu-495 and Lys-500.

This sequence belongs to the TCP-1 chaperonin family. As to quaternary structure, component of the chaperonin-containing T-complex (TRiC), a hexadecamer composed of two identical back-to-back stacked rings enclosing a protein folding chamber. Each ring is made up of eight different subunits: TCP1/CCT1, CCT2, CCT3, CCT4, CCT5, CCT6A/CCT6, CCT7, CCT8. Interacts with PACRG. Interacts with FLCN. Interacts with DLEC1. Interacts with SVEP1.

It localises to the cytoplasm. The catalysed reaction is ATP + H2O = ADP + phosphate + H(+). Functionally, component of the chaperonin-containing T-complex (TRiC), a molecular chaperone complex that assists the folding of actin, tubulin and other proteins upon ATP hydrolysis. The TRiC complex mediates the folding of WRAP53/TCAB1, thereby regulating telomere maintenance. As part of the TRiC complex may play a role in the assembly of BBSome, a complex involved in ciliogenesis regulating transports vesicles to the cilia. The polypeptide is T-complex protein 1 subunit beta (CCT2) (Bos taurus (Bovine)).